Here is a 120-residue protein sequence, read N- to C-terminus: Small ribosomal subunit protein uS13 (120 aa).

Positions Arg92–Lys120 are disordered.

This sequence belongs to the universal ribosomal protein uS13 family. As to quaternary structure, part of the 30S ribosomal subunit. Forms a loose heterodimer with protein S19. Forms two bridges to the 50S subunit in the 70S ribosome.

Its function is as follows. Located at the top of the head of the 30S subunit, it contacts several helices of the 16S rRNA. In the 70S ribosome it contacts the 23S rRNA (bridge B1a) and protein L5 of the 50S subunit (bridge B1b), connecting the 2 subunits; these bridges are implicated in subunit movement. Contacts the tRNAs in the A and P-sites. This Laribacter hongkongensis (strain HLHK9) protein is Small ribosomal subunit protein uS13.